Here is a 926-residue protein sequence, read N- to C-terminus: Ubiquitin carboxyl-terminal hydrolase 4 (926 aa).

The 124-residue stretch at 205 to 328 (SQMEILLIDI…WLKSNYGRQV (124 aa)) folds into the Rhodanese domain. At Ser-443 the chain carries Phosphoserine. A USP domain is found at 562 to 923 (VGLENLGNSC…NAYVLFYHRV (362 aa)). Cys-571 serves as the catalytic Nucleophile. Catalysis depends on His-880, which acts as the Proton acceptor.

It belongs to the peptidase C19 family. Interacts with BRO1, RFU1 and VPS32. Associates with the 26S proteasome.

The protein resides in the cytoplasm. Its subcellular location is the late endosome membrane. It carries out the reaction Thiol-dependent hydrolysis of ester, thioester, amide, peptide and isopeptide bonds formed by the C-terminal Gly of ubiquitin (a 76-residue protein attached to proteins as an intracellular targeting signal).. Its activity is regulated as follows. RFU1 is an inhibitor of deubiquitination activity. In terms of biological role, ubiquitin thioesterase that acts at the late endosome/prevacuolar compartment to recover ubiquitin from ubiquitinated membrane proteins en route to the vacuole. Also removes ubiquitin from soluble proteins targeted to proteasomes. Is essential to maintain a normal level of free ubiquitin. Involved in the ammonium-induced down-regulation of the GAP1 permease and the UME3 destruction in response to oxidative stress. Has a role in the RAD9 checkpoint response to TOP1 poisons. Required for promoting coordination of DNA replication and avoids DNA overreplication. The polypeptide is Ubiquitin carboxyl-terminal hydrolase 4 (DOA4) (Saccharomyces cerevisiae (strain ATCC 204508 / S288c) (Baker's yeast)).